We begin with the raw amino-acid sequence, 163 residues long: Beta-lactoglobulin-2 (163 aa).

Intrachain disulfides connect C66-C161 and C106-C120.

It belongs to the calycin superfamily. Lipocalin family. As to quaternary structure, monomer.

The protein resides in the secreted. In terms of biological role, lactoglobulin is the primary component of whey, it binds retinol and is probably involved in the transport of that molecule. The sequence is that of Beta-lactoglobulin-2 (LGB2) from Felis catus (Cat).